A 513-amino-acid chain; its full sequence is Na(+)/H(+) antiporter NhaB (513 aa).

Transmembrane regions (helical) follow at residues 23–43 (LALIIFLIVNPLIFLISPFVA), 52–72 (IFTLAMALKCYPLLPGGLLAI), 97–117 (LLLMFMVAGIYFMKQLLLFIF), 120–140 (LLLSIRSKMLLSLSFCVAAAF), 144–164 (FLDALTVVAVVISVAVGFYGI), 202–222 (LMMHAGVGTALGGVMTMVGEP), 238–258 (FFLRMSPVTVPVLICGLLTCL), 303–323 (AIIGVWLVTALALHLAEVGLI), 348–368 (TESLPFTALLTVFFSVVAVII), 391–411 (LFYIFNGLLSSISDNVFVGTI), 447–467 (ATPNGQAAFLFLLTSALAPLI), and 475–495 (VWMALPYTLVLTLVGLLCVEF).

This sequence belongs to the NhaB Na(+)/H(+) (TC 2.A.34) antiporter family.

It localises to the cell inner membrane. The enzyme catalyses 2 Na(+)(in) + 3 H(+)(out) = 2 Na(+)(out) + 3 H(+)(in). Na(+)/H(+) antiporter that extrudes sodium in exchange for external protons. This Escherichia coli O6:H1 (strain CFT073 / ATCC 700928 / UPEC) protein is Na(+)/H(+) antiporter NhaB.